The sequence spans 508 residues: Protein NODULATION SIGNALING PATHWAY 2 (508 aa).

Residues 75–98 form a disordered region; sequence ITTTTTTTTTTDEEEEEMETTTTT. Positions 108 to 500 constitute a GRAS domain; it reads VGDDSKGLKL…RRLLSASLWT (393 aa). The tract at residues 115-190 is leucine repeat I (LRI); that stretch reads LKLVHLLMAG…NNHHHHNNNK (76 aa). A VHIID region spans residues 209-273; sequence FQLLQDMSPY…NNGPHLRITA (65 aa). Positions 240-244 match the VHIID motif; sequence VHVID. The leucine repeat II (LRII) stretch occupies residues 289-321; that stretch reads ETGRRLTSFAASLGQPFSFHHCRLDSDETFRPS. The PFYRE stretch occupies residues 331–422; the sequence is LVFNCMLNLP…RVFFGPRIAG (92 aa). Residues 425–500 are SAW; the sequence is GRIYRTGGEE…RRLLSASLWT (76 aa).

It belongs to the GRAS family. Interacts with RAM1. Interacts with IPN2 and RAD1. As to expression, expressed in roots, shoots and leaves.

It localises to the nucleus membrane. The protein localises to the endoplasmic reticulum. Transcriptional regulator essential for Nod-factor-induced gene expression. Acts downstream of calcium spiking and DMI3, a calcium/calmodulin-dependent protein kinase (CCaMK). Transcription factor involved in the control of strigolactone biosynthesis in roots through the activation of the beta-carotene isomerase D27, which participates in a pathway leading to biosynthesis of strigolactones. The chain is Protein NODULATION SIGNALING PATHWAY 2 from Medicago truncatula (Barrel medic).